The primary structure comprises 132 residues: Small ribosomal subunit protein uS8 (132 aa).

It belongs to the universal ribosomal protein uS8 family. In terms of assembly, part of the 30S ribosomal subunit. Contacts proteins S5 and S12.

Functionally, one of the primary rRNA binding proteins, it binds directly to 16S rRNA central domain where it helps coordinate assembly of the platform of the 30S subunit. The chain is Small ribosomal subunit protein uS8 from Rickettsia akari (strain Hartford).